A 782-amino-acid polypeptide reads, in one-letter code: Calcium-independent phospholipase A2-gamma (782 aa).

An N-linked (GlcNAc...) asparagine glycan is attached at Asn4. Disordered regions lie at residues 219–275 and 317–343; these read EKMS…PSAI and SKSQ…AEEK. Residues 220 to 248 are compositionally biased toward basic and acidic residues; that stretch reads KMSQQKENEHFRDKSELEDKKVEEGKLRS. Asn361 carries N-linked (GlcNAc...) asparagine glycosylation. The region spanning 445-640 is the PNPLA domain; that stretch reads LSIDGGGTRG…LLNNPSALAM (196 aa). The short motif at 449-454 is the GXGXXG element; that stretch reads GGGTRG. The chain crosses the membrane as a helical span at residues 475–495; sequence LFDYICGVSTGAILAFMLGLF. Residues 481–485 carry the GXSXG motif; the sequence is GVSTG. The active-site Nucleophile is the Ser483. Asp627 functions as the Proton acceptor in the catalytic mechanism. The short motif at 627-629 is the DGA/G element; the sequence is DGG. An N6-succinyllysine modification is found at Lys736.

In terms of tissue distribution, expressed in parenchymal tissues including heart, skeletal muscle, placenta, brain, liver and pancreas. Also expressed in bronchial epithelial cells and kidney. Highest expression is observed in skeletal muscle and heart.

Its subcellular location is the endoplasmic reticulum membrane. It is found in the mitochondrion membrane. The protein resides in the peroxisome membrane. The enzyme catalyses a 1,2-diacyl-sn-glycero-3-phosphocholine + H2O = a 1-acyl-sn-glycero-3-phosphocholine + a fatty acid + H(+). It catalyses the reaction a 1,2-diacyl-sn-glycero-3-phosphocholine + H2O = a 2-acyl-sn-glycero-3-phosphocholine + a fatty acid + H(+). The catalysed reaction is a 1,2-diacyl-sn-glycero-3-phosphoethanolamine + H2O = a 1-acyl-sn-glycero-3-phosphoethanolamine + a fatty acid + H(+). It carries out the reaction a 1-O-(1Z-alkenyl)-2-acyl-sn-glycero-3-phosphocholine + H2O = a 1-O-(1Z-alkenyl)-sn-glycero-3-phosphocholine + a fatty acid + H(+). The enzyme catalyses a 1-acyl-sn-glycero-3-phosphocholine + H2O = sn-glycerol 3-phosphocholine + a fatty acid + H(+). It catalyses the reaction 1-acyl-2-(9Z,12Z)-octadecadienoyl-sn-glycero-3-phosphocholine + H2O = a 1-acyl-sn-glycero-3-phosphocholine + (9Z,12Z)-octadecadienoate + H(+). The catalysed reaction is 1-acyl-2-(5Z,8Z,11Z,14Z-eicosatetraenoyl)-sn-glycero-3-phosphocholine + H2O = a 1-acyl-sn-glycero-3-phosphocholine + (5Z,8Z,11Z,14Z)-eicosatetraenoate + H(+). It carries out the reaction 1-hexadecanoyl-2-(5Z,8Z,11Z,14Z-eicosatetraenoyl)-sn-glycero-3-phosphocholine + H2O = 1-hexadecanoyl-sn-glycero-3-phosphocholine + (5Z,8Z,11Z,14Z)-eicosatetraenoate + H(+). The enzyme catalyses 1-octadecanoyl-2-(9Z-octadecenoyl)-sn-glycero-3-phosphocholine + H2O = 1-octadecanoyl-sn-glycero-3-phosphocholine + (9Z)-octadecenoate + H(+). It catalyses the reaction 1-hexadecanoyl-2-(9Z-octadecenoyl)-sn-glycero-3-phosphocholine + H2O = 1-hexadecanoyl-sn-glycero-3-phosphocholine + (9Z)-octadecenoate + H(+). The catalysed reaction is 1-hexadecanoyl-2-(9Z,12Z-octadecadienoyl)-sn-glycero-3-phosphocholine + H2O = (9Z,12Z)-octadecadienoate + 1-hexadecanoyl-sn-glycero-3-phosphocholine + H(+). It carries out the reaction 1-acyl-2-(9Z,12Z)-octadecadienoyl-sn-glycero-3-phosphoethanolamine + H2O = a 1-acyl-sn-glycero-3-phosphoethanolamine + (9Z,12Z)-octadecadienoate + H(+). The enzyme catalyses 1-acyl-2-(5Z,8Z,11Z,14Z)-eicosatetraenoyl-sn-glycero-3-phosphoethanolamine + H2O = a 1-acyl-sn-glycero-3-phosphoethanolamine + (5Z,8Z,11Z,14Z)-eicosatetraenoate + H(+). It catalyses the reaction 1-hexadecanoyl-2-(5Z,8Z,11Z,14Z-eicosatetraenoyl)-sn-glycero-3-phosphoethanolamine + H2O = 1-hexadecanoyl-sn-glycero-3-phosphoethanolamine + (5Z,8Z,11Z,14Z)-eicosatetraenoate + H(+). The catalysed reaction is 1-hexadecanoyl-2-(5Z,8Z,11Z,14Z-eicosatetraenoyl)-sn-glycero-3-phosphocholine + H2O = 2-(5Z,8Z,11Z,14Z)-eicosatetraenoyl-sn-glycero-3-phosphocholine + hexadecanoate + H(+). It carries out the reaction 1-octadecanoyl-2-(9Z-octadecenoyl)-sn-glycero-3-phosphocholine + H2O = 2-(9Z-octadecenoyl)-sn-glycero-3-phosphocholine + octadecanoate + H(+). The enzyme catalyses 1-hexadecanoyl-2-(4Z,7Z,10Z,13Z,16Z,19Z-docosahexaenoyl)-sn-glycero-3-phosphocholine + H2O = 2-(4Z,7Z,10Z,13Z,16Z,19Z-docosahexaenoyl)-sn-glycero-3-phosphocholine + hexadecanoate + H(+). It catalyses the reaction 1-O-(1Z)-hexadecenyl-2 (5Z,8Z,11Z,14Z)-eicosatetraenoyl-sn-glycero-3-phosphocholine + H2O = 1-(1Z-hexadecenyl)-sn-glycero-3-phosphocholine + (5Z,8Z,11Z,14Z)-eicosatetraenoate + H(+). The catalysed reaction is 1-O-(1Z-hexadecenyl)-2-(9Z-octadecenoyl)-sn-glycero-3-phosphocholine + H2O = 1-(1Z-hexadecenyl)-sn-glycero-3-phosphocholine + (9Z)-octadecenoate + H(+). It carries out the reaction 1-hexadecanoyl-sn-glycero-3-phosphocholine + H2O = sn-glycerol 3-phosphocholine + hexadecanoate + H(+). The enzyme catalyses 1',3'-bis-[1,2-di-(9Z,12Z-octadecadienoyl)-sn-glycero-3-phospho]-glycerol + H2O = 1'-[1,2-di-(9Z,12Z-octadecadienoyl)-sn-glycero-3-phospho]-3'-[1-(9Z,12Z-octadecadienoyl)-sn-glycero-3-phospho]-glycerol + (9Z,12Z)-octadecadienoate + H(+). It catalyses the reaction 1'-[1-acyl-2-(9-hydroxy-(10E,12Z)-octadecadienoyl)-sn-glycero-3-phospho]-3'-[1,2-diacyl-sn-glycero-3-phospho]-glycerol + H2O = 9-hydroxy-(10E,12Z)-octadecadienoate + 1'-[1,2-diacyl-sn-glycero-3-phospho],3'-[1-acyl-sn-glycero-3-phospho]-glycerol + H(+). It participates in phospholipid metabolism. Its activity is regulated as follows. Calcium-independent phospholipase. Inhibited by (E)-6-bromomethylene-3-1-naphthalenyl-2H-tetrahydropyran-2-one (BEL). The activity toward 1-hexadecanoyl-2-(5Z,8Z,11Z,14Z-eicosatetraenoyl)-sn-glycero-3-phosphocholine is stimulated by cardiolipin. In terms of biological role, calcium-independent and membrane-bound phospholipase, that catalyzes the esterolytic cleavage of fatty acids from glycerophospholipids to yield free fatty acids and lysophospholipids, hence regulating membrane physical properties and the release of lipid second messengers and growth factors. Hydrolyzes phosphatidylethanolamine, phosphatidylcholine and probably phosphatidylinositol with a possible preference for the former. Also has a broad substrate specificity in terms of fatty acid moieties, hydrolyzing saturated and mono-unsaturated fatty acids at nearly equal rates from either the sn-1 or sn-2 position in diacyl phosphatidylcholine. However, has a weak activity toward polyunsaturated fatty acids at the sn-2 position, and thereby favors the production of 2-arachidonoyl lysophosphatidylcholine, a key branch point metabolite in eicosanoid signaling. On the other hand, can produce arachidonic acid from the sn-1 position of diacyl phospholipid and from the sn-2 position of arachidonate-containing plasmalogen substrates. Therefore, plays an important role in the mobilization of arachidonic acid in response to cellular stimuli and the generation of lipid second messengers. Can also hydrolyze lysophosphatidylcholine. In the mitochondrial compartment, catalyzes the hydrolysis and release of oxidized aliphatic chains from cardiolipin and integrates mitochondrial bioenergetics and signaling. It is essential for maintaining efficient bioenergetic mitochondrial function through tailoring mitochondrial membrane lipid metabolism and composition. This is Calcium-independent phospholipase A2-gamma from Homo sapiens (Human).